A 575-amino-acid chain; its full sequence is Cyclic nucleotide-gated channel alpha-4 (575 aa).

Over 1–38 (MSQDGKVKTTESTPPAPTKARKWLPVLDPSGDYYYWWL) the chain is Cytoplasmic. A helical transmembrane segment spans residues 39 to 60 (NTMVFPIMYNLIIVVCRACFPD). Over 61–70 (LQHSYLVAWF) the chain is Extracellular. The helical transmembrane segment at 71–91 (VLDYTSDLLYLLDIGVRFHTG) threads the bilayer. Residues 92 to 116 (FLEQGILVVDKGMIASRYVRTWSFL) lie on the Cytoplasmic side of the membrane. A helical transmembrane segment spans residues 117 to 135 (LDLASLVPTDAAYVQLGPH). Residues 136–140 (IPTLR) lie on the Extracellular side of the membrane. A helical membrane pass occupies residues 141-159 (LNRFLRVPRLFEAFDRTET). Residues 160-166 (RTAYPNA) lie on the Cytoplasmic side of the membrane. The tract at residues 164-272 (PNAFRIAKLM…GSMSSVIYNM (109 aa)) is ion conduction pathway. The helical transmembrane segment at 167–190 (FRIAKLMLYIFVVIHWNSCLYFAL) threads the bilayer. Over 191-213 (SRYLGFGRDAWVYPDPAQPGFER) the chain is Extracellular. The next 2 helical transmembrane spans lie at 214–248 (LRRQ…LFMV) and 249–273 (GDFL…YNMN). A selectivity filter region spans residues 231-234 (TVGD). A C-linker region spans residues 274-350 (TADAAFYPDH…STLSRVQIFQ (77 aa)). Residues 274 to 575 (TADAAFYPDH…AGQAGPSGIE (302 aa)) lie on the Cytoplasmic side of the membrane. Positions 292-302 (LQHVNKRLERR) match the IQ-type motif. 348-471 (IFQNCEASLL…AVMEEKGREI (124 aa)) lines the a nucleoside 3',5'-cyclic phosphate pocket. Positions 354 to 474 (ASLLEELVLK…EEKGREILLK (121 aa)) are cyclic nucleotide-binding domain. 3',5'-cyclic GMP is bound by residues Gly-414, Ser-417, Arg-430, and Thr-431. 3',5'-cyclic AMP contacts are provided by Arg-430 and Thr-431. Positions 493-547 (TESRLKGLDQQLDDLQTKFARLLAELESSALKIAYRIERLEWQTREWPMPEDMGE) form a coiled coil. The tract at residues 537-575 (REWPMPEDMGEADDEAEPGEGTSKDGEGKAGQAGPSGIE) is disordered. The span at 544 to 554 (DMGEADDEAEP) shows a compositional bias: acidic residues.

Belongs to the cyclic nucleotide-gated cation channel (TC 1.A.1.5) family. CNGA4 subfamily. In terms of assembly, the olfactory cyclic nucleotide-gated channel is an heterotetramer composed of CNGA2, CNGA4 and CNGB1b subunits with 2:1:1 stoichiometry. May form homomeric channels gated by nitric oxide. In terms of processing, N-glycosylated. In terms of tissue distribution, olfactory neurons. Expressed in olfactory sensory cilia (at protein level).

Its subcellular location is the cell projection. The protein localises to the cilium membrane. It carries out the reaction Ca(2+)(in) = Ca(2+)(out). The enzyme catalyses Na(+)(in) = Na(+)(out). It catalyses the reaction K(+)(in) = K(+)(out). The catalysed reaction is NH4(+)(in) = NH4(+)(out). It carries out the reaction Rb(+)(in) = Rb(+)(out). The enzyme catalyses Li(+)(in) = Li(+)(out). It catalyses the reaction Cs(+)(in) = Cs(+)(out). With respect to regulation, ca(2+)-calmodulin exerts its inhibitory effect in cAMP sensitivity by binding to IQ-like motif of CNGA4 and preferably binds to the channel in the closed state. Inhibition by PIP3 of the CNG channel probably occurs via CGNA2 binding. Ca(2+) currents are inhibited by pimozide, an L-type Ca(2+) channel blocker. Its function is as follows. Pore-forming subunit of the olfactory cyclic nucleotide-gated channel. Operates in the cilia of olfactory sensory neurons where chemical stimulation of the odorant is converted to an electrical signal. Mediates odorant-induced cAMP-dependent Ca(2+) influx triggering neuron depolarization. The rise of intracellular Ca(2+) levels potentiates the olfactory response by activating Ca(2+)-dependent Cl(-) channels, but it also serves as a negative feedback signal to desensitize the channel for rapid adaptation to odorants. Conducts cAMP- and cGMP-gated ion currents, with permeability for monovalent and divalent cations. May conduct nitric oxide-gated Ca(2+) currents relevant to neurons of vomeronasal organ, a system involved in the perception of pheromones. The sequence is that of Cyclic nucleotide-gated channel alpha-4 from Rattus norvegicus (Rat).